The following is a 296-amino-acid chain: NAD kinase (296 aa).

D72 (proton acceptor) is an active-site residue. NAD(+)-binding positions include 72–73 (DG), 146–147 (ND), R157, K174, D176, 187–192 (TAYALS), and Q247.

Belongs to the NAD kinase family. Requires a divalent metal cation as cofactor.

The protein localises to the cytoplasm. It carries out the reaction NAD(+) + ATP = ADP + NADP(+) + H(+). In terms of biological role, involved in the regulation of the intracellular balance of NAD and NADP, and is a key enzyme in the biosynthesis of NADP. Catalyzes specifically the phosphorylation on 2'-hydroxyl of the adenosine moiety of NAD to yield NADP. This chain is NAD kinase, found in Pseudomonas fluorescens (strain Pf0-1).